The chain runs to 63 residues: Large ribosomal subunit protein bL35 (63 aa).

This sequence belongs to the bacterial ribosomal protein bL35 family.

In Campylobacter jejuni subsp. doylei (strain ATCC BAA-1458 / RM4099 / 269.97), this protein is Large ribosomal subunit protein bL35.